Consider the following 226-residue polypeptide: Potassium/proton antiporter CemA (226 aa).

3 consecutive transmembrane segments (helical) span residues 7–27, 111–131, and 186–206; these read FTSL…SLSF, IICF…LFIL, and IISG…KYWI.

This sequence belongs to the CemA family.

It is found in the plastid. It localises to the chloroplast inner membrane. It carries out the reaction K(+)(in) + H(+)(out) = K(+)(out) + H(+)(in). In terms of biological role, contributes to K(+)/H(+) antiport activity by supporting proton efflux to control proton extrusion and homeostasis in chloroplasts in a light-dependent manner to modulate photosynthesis. Prevents excessive induction of non-photochemical quenching (NPQ) under continuous-light conditions. Indirectly promotes efficient inorganic carbon uptake into chloroplasts. The protein is Potassium/proton antiporter CemA of Buxus microphylla (Littleleaf boxwood).